The sequence spans 138 residues: Acidic phospholipase A2 6 (138 aa).

Positions 1 to 16 (MRTLWIMAVLLVGVEG) are cleaved as a signal peptide. Intrachain disulfides connect C42/C131, C44/C60, C59/C111, C65/C138, C66/C104, C73/C97, and C91/C102. Residues Y43, G45, and G47 each coordinate Ca(2+). The active site involves H63. Position 64 (D64) interacts with Ca(2+). Residue D105 is part of the active site.

It belongs to the phospholipase A2 family. Group II subfamily. D49 sub-subfamily. In terms of assembly, homodimer. Ca(2+) serves as cofactor. In terms of tissue distribution, expressed by the venom gland.

It is found in the secreted. The catalysed reaction is a 1,2-diacyl-sn-glycero-3-phosphocholine + H2O = a 1-acyl-sn-glycero-3-phosphocholine + a fatty acid + H(+). Snake venom phospholipase A2 (PLA2) that has high lipolytic activity. PLA2 catalyzes the calcium-dependent hydrolysis of the 2-acyl groups in 3-sn-phosphoglycerides. The chain is Acidic phospholipase A2 6 from Craspedocephalus gramineus (Bamboo pit viper).